A 103-amino-acid polypeptide reads, in one-letter code: Large ribosomal subunit protein bL21 (103 aa).

Belongs to the bacterial ribosomal protein bL21 family. Part of the 50S ribosomal subunit. Contacts protein L20.

This protein binds to 23S rRNA in the presence of protein L20. The chain is Large ribosomal subunit protein bL21 from Heliobacterium modesticaldum (strain ATCC 51547 / Ice1).